A 620-amino-acid chain; its full sequence is uncharacterized protein (620 aa).

Residues 324-586 (RRYVTIAIIK…HPWEKGIYPT (263 aa)) form the Radical SAM core domain. 3 residues coordinate [4Fe-4S] cluster: C338, C342, and C345. The residue at position 552 (K552) is an N6-(pyridoxal phosphate)lysine.

The protein belongs to the radical SAM superfamily. KamA family. [4Fe-4S] cluster serves as cofactor. It depends on pyridoxal 5'-phosphate as a cofactor.

This is an uncharacterized protein from Methanocaldococcus jannaschii (strain ATCC 43067 / DSM 2661 / JAL-1 / JCM 10045 / NBRC 100440) (Methanococcus jannaschii).